The primary structure comprises 99 residues: uncharacterized protein (99 aa).

This is an uncharacterized protein from Caenorhabditis elegans.